A 197-amino-acid chain; its full sequence is uncharacterized protein (197 aa).

4 consecutive transmembrane segments (helical) span residues 12–41 (LCIFGIGLFVPATGTFACGLLLVLGFWVLF), 78–100 (LIQGFFPLVRMMLCPYLFITALS), 120–142 (VGVFGIMIAGISLVRELVAFGCV), and 162–184 (IRFAATGAGTLISCGIVLWIFRS).

Its subcellular location is the cell membrane. This is an uncharacterized protein from Treponema pallidum (strain Nichols).